The sequence spans 348 residues: GMP reductase (348 aa).

Residue 108-131 (ADFIKLRQILALSPSLKFICIDVA) participates in NADP(+) binding. Positions 181 and 183 each coordinate K(+). The Thioimidate intermediate role is filled by Cys186. 216–239 (IVSDGGCTMPGDVAKAFGGGADFV) contacts NADP(+).

It belongs to the IMPDH/GMPR family. GuaC type 1 subfamily. As to quaternary structure, homotetramer.

The catalysed reaction is IMP + NH4(+) + NADP(+) = GMP + NADPH + 2 H(+). Catalyzes the irreversible NADPH-dependent deamination of GMP to IMP. It functions in the conversion of nucleobase, nucleoside and nucleotide derivatives of G to A nucleotides, and in maintaining the intracellular balance of A and G nucleotides. In Edwardsiella ictaluri (strain 93-146), this protein is GMP reductase.